We begin with the raw amino-acid sequence, 118 residues long: uncharacterized protein (118 aa).

Residues 7–27 (LLTGLFVGGIIGGAAVLLTAP) form a helical membrane-spanning segment. The stretch at 31–118 (KQLREKMKTN…IRQLEKTLQN (88 aa)) forms a coiled coil.

The protein resides in the cell membrane. This is an uncharacterized protein from Bacillus subtilis (strain 168).